A 479-amino-acid polypeptide reads, in one-letter code: Cardiolipin synthase A (479 aa).

The next 2 membrane-spanning stretches (helical) occupy residues Phe8–Leu28 and Ile38–Phe58. 2 PLD phosphodiesterase domains span residues Ile218 to Tyr245 and Glu392 to Ser419. Catalysis depends on residues His223, Lys225, Asp230, His397, Lys399, and Asp404.

It belongs to the phospholipase D family. Cardiolipin synthase subfamily. ClsA sub-subfamily.

The protein resides in the cell inner membrane. It carries out the reaction 2 a 1,2-diacyl-sn-glycero-3-phospho-(1'-sn-glycerol) = a cardiolipin + glycerol. Functionally, catalyzes the reversible phosphatidyl group transfer from one phosphatidylglycerol molecule to another to form cardiolipin (CL) (diphosphatidylglycerol) and glycerol. In Pseudomonas syringae pv. syringae (strain B728a), this protein is Cardiolipin synthase A.